Consider the following 647-residue polypeptide: Acetyl-coenzyme A synthetase (647 aa).

Residues 190–193 and threonine 310 each bind CoA; that span reads RGGR. ATP contacts are provided by residues 386–388, 410–415, aspartate 499, and arginine 514; these read GEP and DTWWQT. CoA is bound at residue serine 522. Arginine 525 is a binding site for ATP. 3 residues coordinate Mg(2+): valine 536, histidine 538, and valine 541. Arginine 583 is a CoA binding site. Position 608 is an N6-acetyllysine (lysine 608).

The protein belongs to the ATP-dependent AMP-binding enzyme family. It depends on Mg(2+) as a cofactor. Post-translationally, acetylated. Deacetylation by the SIR2-homolog deacetylase activates the enzyme.

The catalysed reaction is acetate + ATP + CoA = acetyl-CoA + AMP + diphosphate. Its function is as follows. Catalyzes the conversion of acetate into acetyl-CoA (AcCoA), an essential intermediate at the junction of anabolic and catabolic pathways. AcsA undergoes a two-step reaction. In the first half reaction, AcsA combines acetate with ATP to form acetyl-adenylate (AcAMP) intermediate. In the second half reaction, it can then transfer the acetyl group from AcAMP to the sulfhydryl group of CoA, forming the product AcCoA. The protein is Acetyl-coenzyme A synthetase of Xylella fastidiosa (strain 9a5c).